Consider the following 133-residue polypeptide: Small ribosomal subunit protein uS8 (133 aa).

Belongs to the universal ribosomal protein uS8 family. In terms of assembly, part of the 30S ribosomal subunit. Contacts proteins S5 and S12.

Functionally, one of the primary rRNA binding proteins, it binds directly to 16S rRNA central domain where it helps coordinate assembly of the platform of the 30S subunit. This is Small ribosomal subunit protein uS8 from Chlamydia felis (strain Fe/C-56) (Chlamydophila felis).